The primary structure comprises 322 residues: MGVDLESVSEATSGAIGSLLSTTILYPLDTCKSKFQAEVRARGQQKYRYLSDVMWEAISKGQVFSLYQGLGTKNFQSFISQFIYFYSYSYFKRVHSERTGSKSIGTKANLLIAAAAGACTSVLIQPLDTASSRMQTSEFGESKGLWKTLTEGSWADAFDGLGISLLLTSNPAIQYTVFDQLKQHLLKQKNAKAENGSSPVVLSAFMAFVLGAVSKSVATVLTYPAIRCKVMIQAADESKENETKKPRRRTRKTIPGVVYAIWRKEGMLGFFKGLQAQILKTVLSSALLLMIKEKITATTWILILAIRRTLFLTNTKGKLRSP.

3 Solcar repeats span residues 5–94, 104–184, and 202–298; these read LESV…FKRV, IGTK…LKQH, and LSAF…ITAT. The next 6 helical transmembrane spans lie at 8-28, 104-124, 158-178, 201-221, 254-274, and 286-306; these read VSEATSGAIGSLLSTTILYPL, IGTKANLLIAAAAGACTSVLI, FDGLGISLLLTSNPAIQYTVF, VLSAFMAFVLGAVSKSVATVL, IPGVVYAIWRKEGMLGFFKGL, and ALLLMIKEKITATTWILILAI.

Belongs to the mitochondrial carrier (TC 2.A.29) family. In terms of tissue distribution, expressed in stamens, pollen grains, seeds, leaves, cotyledons, roots, stems, flowers, hypocotyls and siliques.

It localises to the peroxisome membrane. Functionally, peroxisomal adenine nucleotide transporter catalyzing the counterexchange of ATP with AMP. ATP is needed by reactions that generate acyl-CoA for peroxisomal fatty acid beta-oxidation during postgerminative growth. Required for the beta-oxidation reactions involved in auxin biosynthesis and for the conversion of seed-reserved triacylglycerols into sucrose that is necessary for growth before the onset of photosynthesis. This chain is Peroxisomal adenine nucleotide carrier 1 (PNC1), found in Arabidopsis thaliana (Mouse-ear cress).